We begin with the raw amino-acid sequence, 71 residues long: ATP synthase subunit c (71 aa).

The next 2 membrane-spanning stretches (helical) occupy residues 5–25 and 46–66; these read VLAAGIAVLSGIGAGVGIGIA and FFILGAALCETTAIYGLVMAF.

The protein belongs to the ATPase C chain family. As to quaternary structure, F-type ATPases have 2 components, F(1) - the catalytic core - and F(0) - the membrane proton channel. F(1) has five subunits: alpha(3), beta(3), gamma(1), delta(1), epsilon(1). F(0) has three main subunits: a(1), b(2) and c(10-14). The alpha and beta chains form an alternating ring which encloses part of the gamma chain. F(1) is attached to F(0) by a central stalk formed by the gamma and epsilon chains, while a peripheral stalk is formed by the delta and b chains.

It localises to the cell membrane. In terms of biological role, f(1)F(0) ATP synthase produces ATP from ADP in the presence of a proton or sodium gradient. F-type ATPases consist of two structural domains, F(1) containing the extramembraneous catalytic core and F(0) containing the membrane proton channel, linked together by a central stalk and a peripheral stalk. During catalysis, ATP synthesis in the catalytic domain of F(1) is coupled via a rotary mechanism of the central stalk subunits to proton translocation. Key component of the F(0) channel; it plays a direct role in translocation across the membrane. A homomeric c-ring of between 10-14 subunits forms the central stalk rotor element with the F(1) delta and epsilon subunits. This Clostridium beijerinckii (strain ATCC 51743 / NCIMB 8052) (Clostridium acetobutylicum) protein is ATP synthase subunit c.